Consider the following 257-residue polypeptide: Discoidin-2 (257 aa).

The beta-sandwich stretch occupies residues 1–155 (MSVPAGSVSC…SLRWELYALP (155 aa)). An F5/8 type C domain is found at 10–154 (CLANALLNLR…ISLRWELYAL (145 aa)). The Ca(2+) site is built by Asn-39, Ser-40, and Asp-47. Residues 81-83 (RGD) carry the Cell attachment site motif. Phosphohistidine is present on His-84. The linker stretch occupies residues 156–162 (VKSYSNP). A lectin-like region spans residues 163-257 (SVQVGEVSIG…FDYVAVEFNN (95 aa)). Asp-209, Arg-218, and Trp-238 together coordinate a carbohydrate.

As to quaternary structure, homotrimer. In terms of processing, the N-terminus is blocked. As to expression, maturing spore cells.

Its function is as follows. Galactose-binding lectin. May be necessary for the primary process of spore formation and may be involved in spore coat formation. This is Discoidin-2 (dscE) from Dictyostelium discoideum (Social amoeba).